Consider the following 1136-residue polypeptide: Coiled-coil domain-containing protein 136 (1136 aa).

A disordered region spans residues 1–46; the sequence is MQAMDGEVLLPALYEEEEEEEEEEEEVEEEQVEKGGSLGSLSMGKH. The segment covering 14–31 has biased composition (acidic residues); the sequence is YEEEEEEEEEEEEVEEEQ. Residue Ser-50 is modified to Phosphoserine. Coiled coils occupy residues 293–631 and 681–730; these read VMQL…QNQE and LQAL…QTQS. 4 disordered regions span residues 741-773, 814-837, 965-990, and 1040-1111; these read GKNS…KSYV, GSVS…DPAE, NRPS…NGVR, and KKER…PDPP. Polar residues predominate over residues 743–752; it reads NSGSRAPSTE. Positions 839–972 form a coiled coil; the sequence is EDLEHFEETV…KENRPSISSE (134 aa). Residues 976-989 show a composition bias toward low complexity; sequence KNVNKNMNKNANGV. Residues 1017–1057 are a coiled coil; that stretch reads YYKASQRRLDELMKEEKEIEEARKKEREKKAKKDLCKLATN. Basic and acidic residues predominate over residues 1040–1052; that stretch reads KKEREKKAKKDLC. A compositionally biased stretch (acidic residues) spans 1067–1091; the sequence is EPTEDEEENFEEYREGEDESCEAAE. A helical membrane pass occupies residues 1112 to 1132; it reads IFSLPLVGLVVISALLWCWWA.

As to expression, present at high level in testis (at protein level).

It localises to the cytoplasmic vesicle. Its subcellular location is the secretory vesicle. The protein resides in the acrosome membrane. In terms of biological role, may play a role in acrosome formation in spermatogenesis and in fertilization. This Mus musculus (Mouse) protein is Coiled-coil domain-containing protein 136 (Ccdc136).